A 563-amino-acid chain; its full sequence is CDKN2A-interacting protein (563 aa).

Alanine 2 is modified (N-acetylalanine). One can recognise an XRN2-binding (XTBD) domain in the interval 19-126 (VETLRCEGET…KVKKRGISSS (108 aa)). Disordered regions lie at residues 122–289 (GISS…LLGS) and 304–351 (SSSE…PSLL). Serine 124 is subject to Phosphoserine. The segment covering 147 to 160 (VERDHGKKSAKTDR) has biased composition (basic and acidic residues). Composition is skewed to low complexity over residues 168–216 (SSPS…SSQV) and 234–248 (SASF…SMNS). Lysine 177 participates in a covalent cross-link: Glycyl lysine isopeptide (Lys-Gly) (interchain with G-Cter in SUMO1). Serine 234 carries the phosphoserine modification. Residues 249–262 (HMTQSTDNRQQSGS) are compositionally biased toward polar residues. Low complexity predominate over residues 270-280 (GSSGSASQSSS). Threonine 340 carries the post-translational modification Phosphothreonine. Serine 371 is subject to Phosphoserine. A DRBM domain is found at 445–520 (NHGELLNAAI…SREALKLFLK (76 aa)).

It belongs to the CARF family. In terms of assembly, interacts with CDKN2A/p14ARF, p53/TP53 and MDM2. Interacts with CHEK2 and MAPK3. Interacts with XRN2. In terms of processing, may be ubiquitinated.

The protein resides in the nucleus. It is found in the nucleoplasm. Its function is as follows. Regulates DNA damage response and cell proliferation in a dose-dependent manner through a number of signaling pathways involved in cell proliferation, apoptosis and senescence. The sequence is that of CDKN2A-interacting protein (Cdkn2aip) from Mus musculus (Mouse).